Reading from the N-terminus, the 484-residue chain is tRNA-2-methylthio-N(6)-dimethylallyladenosine synthase (484 aa).

The MTTase N-terminal domain maps to 36–153; the sequence is GKLYIKTHGC…LPELIRARRE (118 aa). The [4Fe-4S] cluster site is built by C45, C82, C116, C190, C194, and C197. The region spanning 176-415 is the Radical SAM core domain; sequence RAEGPSAFVS…HISAHAASIS (240 aa). Positions 416–479 constitute a TRAM domain; sequence QSMVGSVQRV…SNSLRGRIQL (64 aa). Residues 428 to 450 form a disordered region; that stretch reads EGPSRRDPNELTGKSENMRPVNF.

This sequence belongs to the methylthiotransferase family. MiaB subfamily. In terms of assembly, monomer. The cofactor is [4Fe-4S] cluster.

It localises to the cytoplasm. It catalyses the reaction N(6)-dimethylallyladenosine(37) in tRNA + (sulfur carrier)-SH + AH2 + 2 S-adenosyl-L-methionine = 2-methylsulfanyl-N(6)-dimethylallyladenosine(37) in tRNA + (sulfur carrier)-H + 5'-deoxyadenosine + L-methionine + A + S-adenosyl-L-homocysteine + 2 H(+). Functionally, catalyzes the methylthiolation of N6-(dimethylallyl)adenosine (i(6)A), leading to the formation of 2-methylthio-N6-(dimethylallyl)adenosine (ms(2)i(6)A) at position 37 in tRNAs that read codons beginning with uridine. This chain is tRNA-2-methylthio-N(6)-dimethylallyladenosine synthase, found in Xanthomonas oryzae pv. oryzae (strain KACC10331 / KXO85).